A 177-amino-acid chain; its full sequence is Dihydrofolate reductase (177 aa).

It carries out the reaction (6S)-5,6,7,8-tetrahydrofolate + NADP(+) = 7,8-dihydrofolate + NADPH + H(+). Functionally, provides the tetrahydrofolates necessary for the synthesis of nucleotides and amino acids. Bacteriophage T5 induces high levels of dihydrofolate reductase in the host cell, probably for the viral replication. The polypeptide is Dihydrofolate reductase (Escherichia phage T5 (Enterobacteria phage T5)).